We begin with the raw amino-acid sequence, 465 residues long: Probable glucan endo-1,3-beta-glucosidase eglC (465 aa).

The N-terminal stretch at 1–19 (MFTKTQILALALSIASAEA) is a signal peptide. Residue glutamate 128 is the Proton donor of the active site. Asparagine 183 carries an N-linked (GlcNAc...) asparagine glycan. Glutamate 239 (nucleophile) is an active-site residue. Asparagine 318 is a glycosylation site (N-linked (GlcNAc...) asparagine). 2 stretches are compositionally biased toward low complexity: residues 320–333 (SSAS…SAQS) and 380–438 (SPSA…ATPA). Disordered stretches follow at residues 320–356 (SSAS…GHGG) and 380–440 (SPSA…PADF). Residue glycine 442 is the site of GPI-anchor amidated glycine attachment. Residues 443–465 (AGSRLSGSIFGAAMLVAALAVAL) constitute a propeptide, removed in mature form.

This sequence belongs to the glycosyl hydrolase 17 family. The GPI-anchor is attached to the protein in the endoplasmic reticulum and serves to target the protein to the cell surface. There, the glucosamine-inositol phospholipid moiety is cleaved off and the GPI-modified mannoprotein is covalently attached via its lipidless GPI glycan remnant to the 1,6-beta-glucan of the outer cell wall layer.

The protein localises to the cell membrane. Its subcellular location is the secreted. It localises to the cell wall. The enzyme catalyses Hydrolysis of (1-&gt;3)-beta-D-glucosidic linkages in (1-&gt;3)-beta-D-glucans.. Functionally, glucanases play a role in cell expansion during growth, in cell-cell fusion during mating, and in spore release during sporulation. This enzyme may be involved in beta-glucan degradation and also function biosynthetically as a transglycosylase. This is Probable glucan endo-1,3-beta-glucosidase eglC (eglC) from Emericella nidulans (strain FGSC A4 / ATCC 38163 / CBS 112.46 / NRRL 194 / M139) (Aspergillus nidulans).